The following is a 170-amino-acid chain: uncharacterized protein (170 aa).

The chain crosses the membrane as a helical span at residues 7-27 (LVELLIGLAIISIALNFAVPL).

It localises to the membrane. This is an uncharacterized protein from Haemophilus influenzae (strain ATCC 51907 / DSM 11121 / KW20 / Rd).